Consider the following 123-residue polypeptide: Small ribosomal subunit protein uS12 (123 aa).

D89 carries the 3-methylthioaspartic acid modification.

It belongs to the universal ribosomal protein uS12 family. In terms of assembly, part of the 30S ribosomal subunit. Contacts proteins S8 and S17. May interact with IF1 in the 30S initiation complex.

Its function is as follows. With S4 and S5 plays an important role in translational accuracy. In terms of biological role, interacts with and stabilizes bases of the 16S rRNA that are involved in tRNA selection in the A site and with the mRNA backbone. Located at the interface of the 30S and 50S subunits, it traverses the body of the 30S subunit contacting proteins on the other side and probably holding the rRNA structure together. The combined cluster of proteins S8, S12 and S17 appears to hold together the shoulder and platform of the 30S subunit. The polypeptide is Small ribosomal subunit protein uS12 (Caulobacter vibrioides (strain ATCC 19089 / CIP 103742 / CB 15) (Caulobacter crescentus)).